The sequence spans 534 residues: DM7 family protein GE17491 (534 aa).

The protein belongs to the DM7 family.

This Drosophila yakuba (Fruit fly) protein is DM7 family protein GE17491.